A 237-amino-acid chain; its full sequence is UPF0688 protein C1orf174 homolog (237 aa).

Residues 1–187 (MRSRKLAGGV…LLDDDSNQPM (187 aa)) form a disordered region. Residues 11-28 (RSSARLRARSCSAASASA) show a composition bias toward low complexity. Residues 29–47 (QDTHVTTSAQTACQTPSSH) are compositionally biased toward polar residues. Positions 48 to 76 (KATDRRTSKKFKYDKGHIVKSELQKHRSD) are enriched in basic and acidic residues. Ser183 is modified (phosphoserine).

Belongs to the UPF0688 family.

It localises to the nucleus. The polypeptide is UPF0688 protein C1orf174 homolog (Bos taurus (Bovine)).